Here is a 297-residue protein sequence, read N- to C-terminus: Probable endonuclease 4 (297 aa).

Histidine 69, histidine 110, glutamate 145, aspartate 179, histidine 182, histidine 214, aspartate 227, histidine 229, and glutamate 259 together coordinate Zn(2+).

Belongs to the AP endonuclease 2 family. It depends on Zn(2+) as a cofactor.

It catalyses the reaction Endonucleolytic cleavage to 5'-phosphooligonucleotide end-products.. Its function is as follows. Endonuclease IV plays a role in DNA repair. It cleaves phosphodiester bonds at apurinic or apyrimidinic (AP) sites, generating a 3'-hydroxyl group and a 5'-terminal sugar phosphate. This is Probable endonuclease 4 from Bacillus licheniformis (strain ATCC 14580 / DSM 13 / JCM 2505 / CCUG 7422 / NBRC 12200 / NCIMB 9375 / NCTC 10341 / NRRL NRS-1264 / Gibson 46).